A 269-amino-acid chain; its full sequence is Type II iodothyronine deiodinase (269 aa).

Residues 1-9 (MGILSVDLL) lie on the Lumenal side of the membrane. Residues 10-34 (ITLQILPVFFSNCLFLALYDSVILL) traverse the membrane as a helical; Signal-anchor for type III membrane protein segment. Residues 35–269 (KHVVLLLSRS…KNFSKRUKLD (235 aa)) are Cytoplasmic-facing. The tract at residues 83–103 (NSSVVHVSSPEGGDTSGNGAQ) is disordered. Sec-133 is an active-site residue. Residues Sec-133 and Sec-266 are each a non-standard amino acid (selenocysteine).

It belongs to the iodothyronine deiodinase family. As to quaternary structure, predominantly monomer. Can form homodimers but homodimerization is not essential for enzyme activity. Interacts with USP20 and USP33. Interacts with MARCHF6. Ubiquitinated by MARCHF6, leading to its degradation by the proteasome. Deubiquitinated by USP20 and USP33. Highly expressed in thyroid, mammary and pituitary glands, then in hypothalamus. Low levels detected in diaphragm, heart, kidney and lung.

It localises to the endoplasmic reticulum membrane. The enzyme catalyses 3,3',5-triiodo-L-thyronine + iodide + A + H(+) = L-thyroxine + AH2. It carries out the reaction 3,3'-diiodo-L-thyronine + iodide + A + H(+) = 3,3',5'-triiodo-L-thyronine + AH2. It catalyses the reaction 3'-iodo-L-thyronine + iodide + A + H(+) = 3',5'-diiodo-L-thyronine + AH2. The catalysed reaction is 3,3'-diiodothyronamine + iodide + A + H(+) = 3,3',5'-triiodothyronamine + AH2. The enzyme catalyses 3'-iodothyronamine + iodide + A + H(+) = 3',5'-diiodothyronamine + AH2. In terms of biological role, plays a crucial role in the metabolism of thyroid hormones (TH) and has specific roles in TH activation and inactivation by deiodination. Catalyzes the deiodination of L-thyroxine (T4) to 3,5,3'-triiodothyronine (T3), 3,3',5'-triiodothyronine (rT3) to 3,3'-diiodothyronine (3,3'-T2) and 3',5'-diiodothyronine (3',5'-T2) to 3'-monoiodothyronine (3'-T1) via outer-ring deiodination (ORD). Catalyzes the phenolic ring deiodinations of 3,3',5'-triiodothyronamine and 3',5'- diiodothyronamine. This Bos taurus (Bovine) protein is Type II iodothyronine deiodinase (DIO2).